A 269-amino-acid polypeptide reads, in one-letter code: Protein RKD1 (269 aa).

The region spanning 106–195 (TTTTKKRRCR…EKMEGEENED (90 aa)) is the RWP-RK domain. A coiled-coil region spans residues 175 to 216 (LQKLISNVKELEKMEGEENEDKLRNALEKLEKEKKTIEKLPD). A disordered region spans residues 230–269 (CFKANHKRKRRSGMSTPITSSSSSASASSSSYSSVSGFER). Over residues 249 to 269 (SSSSSASASSSSYSSVSGFER) the composition is skewed to low complexity.

Its subcellular location is the nucleus. Putative transcription factor. This Arabidopsis thaliana (Mouse-ear cress) protein is Protein RKD1 (RKD1).